The following is a 102-amino-acid chain: RNA-binding protein Hfq (102 aa).

One can recognise a Sm domain in the interval 9 to 68 (DPFLNALRRERVPVSIYLVNGIKLQGQIESFDQFVILLKNTVSQMVYKHAISTVVPSRPV). Residues 63-102 (VPSRPVSHHSNNAGGGTSSNYHHGSSAQNTSAQQDSEETE) form a disordered region. A compositionally biased stretch (polar residues) spans 70 to 96 (HHSNNAGGGTSSNYHHGSSAQNTSAQQ).

Belongs to the Hfq family. In terms of assembly, homohexamer.

Functionally, RNA chaperone that binds small regulatory RNA (sRNAs) and mRNAs to facilitate mRNA translational regulation in response to envelope stress, environmental stress and changes in metabolite concentrations. Also binds with high specificity to tRNAs. In Escherichia fergusonii (strain ATCC 35469 / DSM 13698 / CCUG 18766 / IAM 14443 / JCM 21226 / LMG 7866 / NBRC 102419 / NCTC 12128 / CDC 0568-73), this protein is RNA-binding protein Hfq.